A 649-amino-acid chain; its full sequence is Transcription factor E2-alpha (649 aa).

5 disordered regions span residues 34–107 (GKGR…SERS), 127–206 (LPGE…SAKT), 222–267 (LHPS…GLQQ), 291–325 (SAAP…SSSG), and 339–382 (DHSS…DGGL). Composition is skewed to polar residues over residues 56–76 (SSGS…SRTY) and 85–94 (SHNSLPSSTF). Residues 127 to 143 (LPGELGLSSPGPLSPSG) are compositionally biased toward low complexity. 2 positions are modified to phosphoserine: Ser-135 and Ser-140. Positions 145 to 156 (KSGSQYYPSYPS) are enriched in polar residues. The Nuclear localization signal motif lies at 171–177 (SKKVRKV). 2 stretches are compositionally biased toward low complexity: residues 182 to 193 (PSSVYPSSSGDS) and 242 to 259 (GDGS…SVGS). Over residues 339–352 (DHSSNNFSPSPSTP) the composition is skewed to low complexity. A Phosphothreonine modification is found at Thr-351. Residue Ser-355 is modified to Phosphoserine. Residue Arg-367 is modified to Omega-N-methylarginine. Ser-375 carries the post-translational modification Phosphoserine. The tract at residues 385-420 (LSKMEDRLDEAIHVLRSHAVGTASDLHGLLPGHGAL) is leucine-zipper. The segment at 431–547 (GGRHAGLVGG…KAEREKERRV (117 aa)) is disordered. Residues 448-469 (TSGTSLLHTHASLPSQASSLPD) show a composition bias toward polar residues. Lys-494 participates in a covalent cross-link: Glycyl lysine isopeptide (Lys-Gly) (interchain with G-Cter in SUMO2). Ser-524 carries the post-translational modification Phosphoserine. Residue Glu-529 is modified to Phosphothreonine. Basic and acidic residues predominate over residues 537 to 547 (QKAEREKERRV). The 54-residue stretch at 544–597 (ERRVANNARERLRVRDINEAFKELGRMCQLHLSSEKPQTKLLILHQAVAVILSL) folds into the bHLH domain. A Glycyl lysine isopeptide (Lys-Gly) (interchain with G-Cter in SUMO2) cross-link involves residue Lys-620.

In terms of assembly, homodimer. Heterodimer; efficient DNA binding requires dimerization with another bHLH protein. Forms a heterodimer with TWIST1 and TWIST2. Forms a heterodimer with NEUROD1; the heterodimer is inhibited in presence of ID2, but not NR0B2, to E-box element. Forms a heterodimer with TCF15; the heterodimer binds E-box element. Forms a heterodimer with MYOG; heterodimerization enhances MYOG DNA-binding and transcriptional activities. Forms a heterodimer with ATOH8; repress transcription of TCF3 and TCF3-NEUROG3 dimer-induced transactivation of E box-dependent promoters. Component of a nuclear TAL-1 complex composed at least of CBFA2T3, LDB1, TAL1 and TCF3. Interacts with NEUROD2. Interacts with EP300. Interacts with PTF1A, TGFB1I1 and UBE2I. Interacts with BHLHA9. Interacts with ASB2; the interaction is mediated by SKP2 and targets TCF3 for Notch-induced proteasomal degradation. Interacts with transcription factor ASCL5/AmeloD. As to quaternary structure, interacts with RALGAPA1. Interacts with FIGLA. Forms a heterodimer with ATOH7; required for ATOH7 DNA-binding. In terms of processing, phosphorylated following NGF stimulation. Undergoes Notch-induced ubiquitination and subsequent proteasomal degradation which is mediated by ASB1 or ASB2, the substrate-recognition components of probable ECS E3 ubiquitin-protein ligase complexes.

The protein localises to the nucleus. In terms of biological role, transcriptional regulator. Involved in the initiation of neuronal differentiation and mesenchymal to epithelial transition. Heterodimers between TCF3 and tissue-specific basic helix-loop-helix (bHLH) proteins play major roles in determining tissue-specific cell fate during embryogenesis, like muscle or early B-cell differentiation. Together with TCF15, required for the mesenchymal to epithelial transition. Dimers bind DNA on E-box motifs: 5'-CANNTG-3'. Binds to the kappa-E2 site in the kappa immunoglobulin gene enhancer. Binds to IEB1 and IEB2, which are short DNA sequences in the insulin gene transcription control region. Facilitates ATOH7 binding to DNA at the consensus sequence 5'-CAGGTG-3', and positively regulates transcriptional activity. In Mesocricetus auratus (Golden hamster), this protein is Transcription factor E2-alpha (TCF3).